We begin with the raw amino-acid sequence, 310 residues long: N-acetyl-gamma-glutamyl-phosphate reductase (310 aa).

C117 is a catalytic residue.

The protein belongs to the NAGSA dehydrogenase family. Type 2 subfamily.

The protein localises to the cytoplasm. It catalyses the reaction N-acetyl-L-glutamate 5-semialdehyde + phosphate + NADP(+) = N-acetyl-L-glutamyl 5-phosphate + NADPH + H(+). It participates in amino-acid biosynthesis; L-arginine biosynthesis; N(2)-acetyl-L-ornithine from L-glutamate: step 3/4. Functionally, catalyzes the NADPH-dependent reduction of N-acetyl-5-glutamyl phosphate to yield N-acetyl-L-glutamate 5-semialdehyde. The protein is N-acetyl-gamma-glutamyl-phosphate reductase of Brucella ovis (strain ATCC 25840 / 63/290 / NCTC 10512).